The following is a 298-amino-acid chain: MNHIQEAFLNTLKVERNFSEHTLKSYQDDLIQFNQFLEQEHLQLNTFEYRDARNYLSYLYLNHLKRTSVSRKISTLRTLYEYWMTLDENIINPFVHLVHPKKEKYLPQFSLEEEMEALFTTVEKDTSKNLRDRVILELLYATGIRVSELVNIKKQDIDFYANGVTVLGKGSKERFVPFGAYCRQSIENYLEHFKPIQSCNHDFLILNMKGEAITERGVRYVLNDIVKRTAGVSEIHPHKLRHTFATHLLNQGADLRTVQSLLGHVNLSTTGKYTHVSNQQLRKVYLNAHPRAKKENET.

The region spanning 1 to 84 (MNHIQEAFLN…TLRTLYEYWM (84 aa)) is the Core-binding (CB) domain. The region spanning 105 to 286 (YLPQFSLEEE…SNQQLRKVYL (182 aa)) is the Tyr recombinase domain. Active-site residues include Arg145, Lys169, His238, Arg241, and His264. The active-site O-(3'-phospho-DNA)-tyrosine intermediate is the Tyr273.

It belongs to the 'phage' integrase family. XerC subfamily. As to quaternary structure, forms a cyclic heterotetrameric complex composed of two molecules of XerC and two molecules of XerD.

The protein resides in the cytoplasm. Functionally, site-specific tyrosine recombinase, which acts by catalyzing the cutting and rejoining of the recombining DNA molecules. The XerC-XerD complex is essential to convert dimers of the bacterial chromosome into monomers to permit their segregation at cell division. It also contributes to the segregational stability of plasmids. The chain is Tyrosine recombinase XerC from Staphylococcus aureus.